Reading from the N-terminus, the 162-residue chain is NADH-quinone oxidoreductase subunit I (162 aa).

2 consecutive 4Fe-4S ferredoxin-type domains span residues 52 to 82 (LRRY…IEAG) and 93 to 122 (TRYD…EGPN). [4Fe-4S] cluster-binding residues include C62, C65, C68, C72, C102, C105, C108, and C112.

The protein belongs to the complex I 23 kDa subunit family. NDH-1 is composed of 14 different subunits. Subunits NuoA, H, J, K, L, M, N constitute the membrane sector of the complex. The cofactor is [4Fe-4S] cluster.

It is found in the cell inner membrane. It catalyses the reaction a quinone + NADH + 5 H(+)(in) = a quinol + NAD(+) + 4 H(+)(out). In terms of biological role, NDH-1 shuttles electrons from NADH, via FMN and iron-sulfur (Fe-S) centers, to quinones in the respiratory chain. The immediate electron acceptor for the enzyme in this species is believed to be ubiquinone. Couples the redox reaction to proton translocation (for every two electrons transferred, four hydrogen ions are translocated across the cytoplasmic membrane), and thus conserves the redox energy in a proton gradient. This Beijerinckia indica subsp. indica (strain ATCC 9039 / DSM 1715 / NCIMB 8712) protein is NADH-quinone oxidoreductase subunit I.